Reading from the N-terminus, the 232-residue chain is Glycerol-3-phosphate acyltransferase (232 aa).

Transmembrane regions (helical) follow at residues 4 to 24, 56 to 76, 90 to 110, 124 to 144, 152 to 172, and 191 to 211; these read FLAI…IIAG, VVTL…VGFF, IALS…TVFA, MLIG…LLAV, VGSI…KYVF, and SLDY…IYTH.

This sequence belongs to the PlsY family. In terms of assembly, probably interacts with PlsX.

Its subcellular location is the cell inner membrane. It carries out the reaction an acyl phosphate + sn-glycerol 3-phosphate = a 1-acyl-sn-glycero-3-phosphate + phosphate. The protein operates within lipid metabolism; phospholipid metabolism. In terms of biological role, catalyzes the transfer of an acyl group from acyl-phosphate (acyl-PO(4)) to glycerol-3-phosphate (G3P) to form lysophosphatidic acid (LPA). This enzyme utilizes acyl-phosphate as fatty acyl donor, but not acyl-CoA or acyl-ACP. This chain is Glycerol-3-phosphate acyltransferase, found in Chlorobaculum tepidum (strain ATCC 49652 / DSM 12025 / NBRC 103806 / TLS) (Chlorobium tepidum).